We begin with the raw amino-acid sequence, 685 residues long: Threonine--tRNA ligase (685 aa).

The interval 1–28 (MTSPAPEHSAAPLRVPAGTTAGTAVREA) is disordered. The TGS domain maps to 1 to 65 (MTSPAPEHSA…EVDVDVEPVA (65 aa)). The segment at 262-568 (DHRKLGTELD…LTEHYAGAFP (307 aa)) is catalytic. 3 residues coordinate Zn(2+): C367, H418, and H545.

Belongs to the class-II aminoacyl-tRNA synthetase family. As to quaternary structure, homodimer. It depends on Zn(2+) as a cofactor.

The protein localises to the cytoplasm. The catalysed reaction is tRNA(Thr) + L-threonine + ATP = L-threonyl-tRNA(Thr) + AMP + diphosphate + H(+). In terms of biological role, catalyzes the attachment of threonine to tRNA(Thr) in a two-step reaction: L-threonine is first activated by ATP to form Thr-AMP and then transferred to the acceptor end of tRNA(Thr). Also edits incorrectly charged L-seryl-tRNA(Thr). The polypeptide is Threonine--tRNA ligase (Rhodococcus erythropolis (strain PR4 / NBRC 100887)).